Consider the following 522-residue polypeptide: Putative E3 ubiquitin-protein ligase RING1a (522 aa).

Polar residues predominate over residues 1-10; it reads MSVKNNSFSS. Positions 1–119 are disordered; that stretch reads MSVKNNSFSS…RSPSSISGDQ (119 aa). Basic and acidic residues predominate over residues 32–64; that stretch reads LQEKDETKEEKEGDEEVKHDEAEEDQEVVKPND. Residues 65 to 106 are compositionally biased toward acidic residues; sequence AEEDDDGDDAEEDEEEEVEAEEDEEAEEEEEEEEEEEEEEED. The segment at 136–176 adopts an RING-type zinc-finger fold; sequence CPICLGIIKKTRTVMECLHRFCRECIDKSMRLGNNECPACR. Disordered regions lie at residues 250-347 and 363-385; these read VLMR…DTKG and RGGT…KSVR. Residues 287–306 show a composition bias toward basic and acidic residues; that stretch reads NNNRGRDKDSSSDERGTEVR. Over residues 316-325 the composition is skewed to low complexity; the sequence is SRSTQHPSSS. Composition is skewed to polar residues over residues 326-336 and 366-384; these read GANKNNGNCAD and TRSN…SKSV.

In terms of assembly, homodimer or heterodimer with RING1B. Interacts with CLF. Component of the PRC1-like complex, at least composed of RING1A, RING1B and LHP1.

It is found in the nucleus. It catalyses the reaction S-ubiquitinyl-[E2 ubiquitin-conjugating enzyme]-L-cysteine + [acceptor protein]-L-lysine = [E2 ubiquitin-conjugating enzyme]-L-cysteine + N(6)-ubiquitinyl-[acceptor protein]-L-lysine.. Its pathway is protein modification; protein ubiquitination. Its function is as follows. Putative E3 ubiquitin-protein ligase that mediates monoubiquitination of 'Lys-119' of histone H2A (H2AK119ub), thereby playing a central role in histone code and gene regulation. Functionally, as part of the PRC1-like complex, repress class I KNOX gene expression. PcG PRC1 complex maintains the transcriptionally repressive state of many genes, including Hox genes, throughout development. PcG PRC1 complex acts via chromatin remodeling and modification of histones, rendering chromatin heritably changed in its expressibility. The protein is Putative E3 ubiquitin-protein ligase RING1a (RING1A) of Arabidopsis thaliana (Mouse-ear cress).